A 162-amino-acid polypeptide reads, in one-letter code: uncharacterized protein (162 aa).

It belongs to the A.longa ORF167/ORF288 family.

It localises to the plastid. This is an uncharacterized protein from Euglena longa (Euglenophycean alga).